The chain runs to 641 residues: Soluble starch synthase 1, chloroplastic/amyloplastic (641 aa).

ADP-alpha-D-glucose is bound at residue Lys145.

It belongs to the glycosyltransferase 1 family. Bacterial/plant glycogen synthase subfamily. As to expression, high expression in leaves and very low in tubers.

The protein resides in the plastid. The protein localises to the chloroplast. It localises to the amyloplast. It catalyses the reaction [(1-&gt;4)-alpha-D-glucosyl](n) + ADP-alpha-D-glucose = [(1-&gt;4)-alpha-D-glucosyl](n+1) + ADP + H(+). The protein operates within glycan biosynthesis; starch biosynthesis. Plays a minor role in starch synthesis in storage organs (tubers), but may contribute to the deposition of transient starch in chloroplasts of leaves. This is Soluble starch synthase 1, chloroplastic/amyloplastic from Solanum tuberosum (Potato).